The sequence spans 525 residues: DNA damage-binding protein CMR1 (525 aa).

Disordered stretches follow at residues 38 to 86 and 212 to 233; these read AGIF…AESE and GILDASQQPDQNESDEEDEYPD. Over residues 53-62 the composition is skewed to basic residues; sequence TKKKPAPKRV. WD repeat units follow at residues 183 to 224, 241 to 281, 288 to 328, 339 to 379, 384 to 425, 448 to 491, and 494 to 525; these read ITRE…DQNE, PHTN…ATEA, SDDE…KANP, LSEK…TKHP, EHES…KDWK, GKWV…LAQL, and DVITAVPAVAVFHRTQNWVVGGTGSAKVCLWM. Residues 223-232 are compositionally biased toward acidic residues; it reads NESDEEDEYP.

This sequence belongs to the WD repeat DDB2/WDR76 family.

Its function is as follows. DNA-binding protein that binds to both single- and double-stranded DNA. Binds preferentially to UV-damaged DNA. May be involved in DNA-metabolic processes. This is DNA damage-binding protein CMR1 from Coccidioides immitis (strain RS) (Valley fever fungus).